Here is a 95-residue protein sequence, read N- to C-terminus: Co-chaperonin GroES (95 aa).

Belongs to the GroES chaperonin family. Heptamer of 7 subunits arranged in a ring. Interacts with the chaperonin GroEL.

The protein localises to the cytoplasm. Its function is as follows. Together with the chaperonin GroEL, plays an essential role in assisting protein folding. The GroEL-GroES system forms a nano-cage that allows encapsulation of the non-native substrate proteins and provides a physical environment optimized to promote and accelerate protein folding. GroES binds to the apical surface of the GroEL ring, thereby capping the opening of the GroEL channel. The protein is Co-chaperonin GroES of Xylella fastidiosa (strain M12).